A 160-amino-acid chain; its full sequence is Phosphopantetheine adenylyltransferase (160 aa).

Thr-10 contacts substrate. ATP-binding positions include 10-11 (TF) and His-18. Substrate-binding residues include Lys-42, Leu-74, and Arg-88. ATP-binding positions include 89 to 91 (GLR), Glu-99, and 124 to 130 (NSFISST).

It belongs to the bacterial CoaD family. In terms of assembly, homohexamer. It depends on Mg(2+) as a cofactor.

Its subcellular location is the cytoplasm. The catalysed reaction is (R)-4'-phosphopantetheine + ATP + H(+) = 3'-dephospho-CoA + diphosphate. It participates in cofactor biosynthesis; coenzyme A biosynthesis; CoA from (R)-pantothenate: step 4/5. Functionally, reversibly transfers an adenylyl group from ATP to 4'-phosphopantetheine, yielding dephospho-CoA (dPCoA) and pyrophosphate. The protein is Phosphopantetheine adenylyltransferase of Aeromonas salmonicida (strain A449).